The chain runs to 364 residues: Uroporphyrinogen decarboxylase (364 aa).

Substrate contacts are provided by residues 28-32, Phe47, Asp78, Tyr158, Thr213, and His334; that span reads RQAGR.

Belongs to the uroporphyrinogen decarboxylase family. Homodimer.

It is found in the cytoplasm. It catalyses the reaction uroporphyrinogen III + 4 H(+) = coproporphyrinogen III + 4 CO2. The protein operates within porphyrin-containing compound metabolism; protoporphyrin-IX biosynthesis; coproporphyrinogen-III from 5-aminolevulinate: step 4/4. Functionally, catalyzes the decarboxylation of four acetate groups of uroporphyrinogen-III to yield coproporphyrinogen-III. The polypeptide is Uroporphyrinogen decarboxylase (Ralstonia nicotianae (strain ATCC BAA-1114 / GMI1000) (Ralstonia solanacearum)).